The primary structure comprises 247 residues: MVGWGVLILLMVLWLPRQAYAMHIMEGYLPLGWCLFWAALCLPALILGTRSLQKQVGDNLRMKLVLALSAAFAFVLSALKLPSVTGSSSHPTGVGLGAVLFGPMAMSVVGCIILLFQALLLAHGGITTLGANTFSMAVVGPTVSYVVFRIFQKSGFGRGVAVFLAAALGDLSTYLTTSLQLALAFPAPIGGVASSFWKFASIFAVTQVPLAVSEGLLTVIMVNWVMKYSPEVLSRAMNLPEEGHHEA.

Residues 1 to 21 form the signal peptide; that stretch reads MVGWGVLILLMVLWLPRQAYA. The next 7 helical transmembrane spans lie at 27 to 47, 64 to 84, 96 to 116, 119 to 139, 159 to 179, 181 to 201, and 202 to 222; these read GYLP…ALIL, LVLA…LPSV, LGAV…ILLF, LLLA…MAVV, GVAV…TTSL, LALA…KFAS, and IFAV…VIMV.

This sequence belongs to the CbiM family. Forms an energy-coupling factor (ECF) transporter complex composed of an ATP-binding protein (A component, CbiO), a transmembrane protein (T component, CbiQ) and 2 possible substrate-capture proteins (S components, CbiM and CbiN) of unknown stoichimetry.

The protein resides in the cell membrane. It participates in cofactor biosynthesis; adenosylcobalamin biosynthesis. Functionally, part of the energy-coupling factor (ECF) transporter complex CbiMNOQ involved in cobalt import. The polypeptide is Cobalt transport protein CbiM (Kyrpidia tusciae (strain DSM 2912 / NBRC 15312 / T2) (Bacillus tusciae)).